The chain runs to 75 residues: UPF0235 protein Mvan_2846 (75 aa).

Belongs to the UPF0235 family.

This is UPF0235 protein Mvan_2846 from Mycolicibacterium vanbaalenii (strain DSM 7251 / JCM 13017 / BCRC 16820 / KCTC 9966 / NRRL B-24157 / PYR-1) (Mycobacterium vanbaalenii).